The chain runs to 363 residues: Ethanolamine kinase 1 (363 aa).

This sequence belongs to the choline/ethanolamine kinase family.

It is found in the cytoplasm. It catalyses the reaction ethanolamine + ATP = phosphoethanolamine + ADP + H(+). Its pathway is phospholipid metabolism; phosphatidylethanolamine biosynthesis; phosphatidylethanolamine from ethanolamine: step 1/3. Functionally, highly specific for ethanolamine phosphorylation. May be a rate-controlling step in phosphatidylethanolamine biosynthesis. This chain is Ethanolamine kinase 1 (Etnk1), found in Mus musculus (Mouse).